Reading from the N-terminus, the 132-residue chain is Interleukin-5 (132 aa).

Positions 1–17 are cleaved as a signal peptide; the sequence is MRLPLQLSILTLAWVWA. Residues Asn-45, Asn-74, and Asn-88 are each glycosylated (N-linked (GlcNAc...) asparagine).

The protein belongs to the IL-5 family. Homodimer; disulfide-linked. Interacts with IL5RA. Interacts with CSF2RB.

It localises to the secreted. Homodimeric cytokine expressed predominantly by T-lymphocytes and NK cells that plays an important role in the survival, differentiation, and chemotaxis of eosinophils. Also acts on activated and resting B-cells to induce immunoglobulin production, growth, and differentiation. Mechanistically, exerts its biological effects through a receptor composed of IL5RA subunit and the cytokine receptor common subunit beta/CSF2RB. Binding to the receptor leads to activation of various kinases including LYN, SYK and JAK2 and thereby propagates signals through the RAS-MAPK and JAK-STAT5 pathways respectively. The sequence is that of Interleukin-5 (IL5) from Meriones unguiculatus (Mongolian jird).